The chain runs to 436 residues: Serine carboxypeptidase-like 15 (436 aa).

The N-terminal stretch at 1–24 (MASWIFKLLLLLQCVLVLIQHADS) is a signal peptide. Cystine bridges form between Cys-83–Cys-326, Cys-247–Cys-261, and Cys-285–Cys-292. A glycan (N-linked (GlcNAc...) asparagine) is linked at Asn-104. Ser-179 is a catalytic residue. N-linked (GlcNAc...) asparagine glycans are attached at residues Asn-306 and Asn-345. Residue Asp-361 is part of the active site. Asn-377 is a glycosylation site (N-linked (GlcNAc...) asparagine). The active site involves His-414.

It belongs to the peptidase S10 family. Expressed in seedlings and roots.

It is found in the secreted. Probable carboxypeptidase. This is Serine carboxypeptidase-like 15 (SCPL15) from Arabidopsis thaliana (Mouse-ear cress).